Here is a 2193-residue protein sequence, read N- to C-terminus: ATP-dependent helicase BRM (2193 aa).

Methionine 1 carries the N-acetylmethionine modification. Residues 1 to 10 (MQSGGSGGGP) are compositionally biased toward gly residues. Disordered stretches follow at residues 1-126 (MQSG…QEGQ), 175-231 (MQDL…PGNM), 293-466 (QKAG…GFTK), 511-558 (SPAI…DNVG), and 580-649 (TSTD…ASAR). Residues 23–62 (ASTSSAASPSSSSSSVQQQQQQQQQQQQQQQLASRQQQQQ) are compositionally biased toward low complexity. Positions 38–58 (VQQQQQQQQQQQQQQQLASRQ) form a coiled coil. Over residues 79–88 (GVQGMMGGGN) the composition is skewed to gly residues. Composition is skewed to low complexity over residues 91–102 (SSPGSMQMPQQS), 110–126 (QQQQQQQQQGSSTQEGQ), and 180–192 (PSSQPQASSSKPS). Polar residues predominate over residues 204 to 223 (ESSSQQRNETKSHPQQQVGT). The segment covering 301-320 (ASQSPSIPISSQPASSSVVP) has biased composition (low complexity). Polar residues-rich tracts occupy residues 325-339 (PHANSASDISGQSGS), 347-358 (STGSFASTSSPR), 383-412 (QPTNGMPSGNPLQTSANETPVLDQNASTKK), and 421-433 (QMQQPRQLNTPTP). A compositionally biased stretch (low complexity) spans 445–463 (SNSSLQSGQGTQQAQQRSG). In terms of domain architecture, QLQ spans 463–499 (GFTKQQLHVLKAQILAFRRLKKGEGSLPPELLQAISP). 2 stretches are compositionally biased toward basic and acidic residues: residues 517-537 (VQDRSSDKTGEDQARSLECGK) and 611-621 (PRSDSTADKGK). Residues 626 to 638 (DGSQSKVPPQANS) are compositionally biased toward polar residues. The Nuclear localization signal 1 motif lies at 705–712 (LKKINGLL). Positions 726–795 (VLRLQIEEKK…QKAVREKQLK (70 aa)) form a coiled coil. In terms of domain architecture, Helicase ATP-binding spans 993-1158 (LSLYNNKLNG…WSLLNLLLPD (166 aa)). 1006–1013 (DEMGLGKT) contributes to the ATP binding site. Residues 1109–1129 (DEAQRMKDRESVLARDLDRYR) adopt a coiled-coil conformation. One can recognise a Helicase C-terminal domain in the interval 1312–1489 (ILDRILIKLQ…QYKIDMADEV (178 aa)). 2 disordered regions span residues 1583 to 1775 (SKKP…DEEQ) and 1789 to 1894 (LRPR…NAGA). Residues 1608 to 1617 (KRGRPKSKKI) show a composition bias toward basic residues. Positions 1618 to 1638 (NYKEIEDDIAGYSEESSEERN) form a coiled coil. Phosphoserine is present on serine 1641. A compositionally biased stretch (acidic residues) spans 1642–1657 (GNEEEGDIRQFDDDEL). Over residues 1821–1832 (TVVDSHSSRQDQ) the composition is skewed to basic and acidic residues. The segment covering 1833–1842 (SDSSSRLRSV) has biased composition (low complexity). Polar residues-rich tracts occupy residues 1848-1870 (ASTSKLHVSSPKSGRLNATQLTV) and 1882-1892 (DGTSPISSSNA). Residues 1895–2005 (RMSHIIQKRC…NLFFDLLKMS (111 aa)) form the Bromo domain. Positions 1901–1908 (QKRCKIVI) match the Nuclear localization signal 2 motif. Over residues 2022–2032 (GSAPTLVSTPT) the composition is skewed to polar residues. The disordered stretch occupies residues 2022 to 2193 (GSAPTLVSTP…DSGKRRPSHL (172 aa)). The residue at position 2137 (serine 2137) is a Phosphoserine. Residues 2149 to 2166 (LAQQQRWPNQPTHPNNSG) show a composition bias toward polar residues.

The protein belongs to the SNF2/RAD54 helicase family. Interacts with SWI3B, SWI3C, H3 and H4, but not with SWI3A, SWI3D or BSH. Interacts with LFY. Interacts with REF6. Binds to FGT1. Highly expressed in inflorescences and leaves. Low expression in siliques, roots and seedlings. Detected in shoot apical meristem, root meristem, vascular tissue of developing leaves, petals, stamens filaments, anthers and carpels.

The protein resides in the nucleus. It catalyses the reaction ATP + H2O = ADP + phosphate + H(+). In terms of biological role, ATPase subunit of a multiprotein complex equivalent of the SWI/SNF complex that acts by remodeling the chromatin by catalyzing an ATP-dependent alteration in the structure of nucleosomal DNA. Represses embryonic genes in leaves and controls shoot development and flowering. Activates flower homeotic genes. The association of BRM with its target genes requires REF6. Necessary to acquire heat stress (HS) memory, by globally binding to HS memory genes. In Arabidopsis thaliana (Mouse-ear cress), this protein is ATP-dependent helicase BRM.